The primary structure comprises 245 residues: Ribonuclease 3 (245 aa).

In terms of domain architecture, RNase III spans 17–146 (FAKKMNELGF…FVGALYLDQG (130 aa)). Glutamate 59 is a Mg(2+) binding site. Aspartate 63 is an active-site residue. Mg(2+) contacts are provided by aspartate 132 and glutamate 135. Glutamate 135 is a catalytic residue. The DRBM domain maps to 172 to 241 (DFKTQFQEYV…AESAYSKLKS (70 aa)). The segment at 217–245 (ATGQGKTKKESEQKAAESAYSKLKSNNNL) is disordered.

This sequence belongs to the ribonuclease III family. As to quaternary structure, homodimer. It depends on Mg(2+) as a cofactor.

Its subcellular location is the cytoplasm. The enzyme catalyses Endonucleolytic cleavage to 5'-phosphomonoester.. Functionally, digests double-stranded RNA. Involved in the processing of primary rRNA transcript to yield the immediate precursors to the large and small rRNAs (23S and 16S). Processes some mRNAs, and tRNAs when they are encoded in the rRNA operon. Processes pre-crRNA and tracrRNA of type II CRISPR loci if present in the organism. This is Ribonuclease 3 from Staphylococcus haemolyticus (strain JCSC1435).